The following is a 128-amino-acid chain: Azurin (128 aa).

The Plastocyanin-like domain occupies 1–128 (AECKVTVDST…SMMKGTVTLK (128 aa)). Residues cysteine 3 and cysteine 26 are joined by a disulfide bond. Histidine 46, cysteine 112, histidine 117, and methionine 121 together coordinate Cu cation.

It is found in the periplasm. Transfers electrons from cytochrome c551 to cytochrome oxidase. This is Azurin from Pseudomonas putida (Arthrobacter siderocapsulatus).